A 315-amino-acid chain; its full sequence is MVNKKINIALIGSGNIGTDLMIKALRSSTLNPVWMVGIDENSDGLKRAKALGLKTTHLGIDELLTHIEADNIQIAFDATSAYVHEENNRKLQSKGVKVIDLTPAAIGPYCIPPVNLESLLSQTENQTQINDGSISGNLNMVTCGGQATIPIIAAISRVQSVDYGEIVATIASKSAGPGTRKNIDEFTRTTADAIEQIGGARQGKAIIVMNPAEPPLMMRDTVHCLTQDEPDVEAITASVLSMIEQVQEYVPGYRLKNGPVFDGNRVSVFLEVAGLGDYLPEYAGNLDIMTSAALCTGEMLARNLRSNMSVKDSHH.

NAD(+) is bound at residue 13–16; the sequence is SGNI. Catalysis depends on C143, which acts as the Acyl-thioester intermediate. Residues 174–182 and N285 each bind NAD(+); that span reads SAGPGTRKN.

This sequence belongs to the acetaldehyde dehydrogenase family.

It catalyses the reaction acetaldehyde + NAD(+) + CoA = acetyl-CoA + NADH + H(+). The protein is Acetaldehyde dehydrogenase of Shewanella woodyi (strain ATCC 51908 / MS32).